The sequence spans 159 residues: Growth arrest and DNA damage-inducible protein GADD45 gamma (159 aa).

The segment at Val-43–Cys-86 is homodimerization.

The protein belongs to the GADD45 family. In terms of assembly, undergoes concentration-dependent homodimerization, which is required for growth inhibititory activity and enhances interaction with PCNA. Interacts with GADD45GIP1. Interacts with PCNA.

Its function is as follows. Involved in the regulation of growth and apoptosis. Mediates activation of stress-responsive MTK1/MEKK4 MAPKKK. This chain is Growth arrest and DNA damage-inducible protein GADD45 gamma (Gadd45g), found in Mus musculus (Mouse).